The following is a 393-amino-acid chain: Zinc finger CCHC domain-containing protein 18 (393 aa).

Disordered stretches follow at residues 281 to 300 and 313 to 341; these read VEPEDPPLSSPGASSLRGTA and DDFDEESPSTSSGSGQRNNGPGDLGRTRK. Composition is skewed to polar residues over residues 291–300 and 320–331; these read PGASSLRGTA and PSTSSGSGQRNN. Residues 346 to 363 form a CCHC-type zinc finger; it reads IRCPHCGEEGHAKETCDN.

This sequence belongs to the ZCCHC12 family.

In Mus musculus (Mouse), this protein is Zinc finger CCHC domain-containing protein 18.